The chain runs to 575 residues: Carboxylesterase 5A (575 aa).

The N-terminal stretch at 1–27 is a signal peptide; that stretch reads MSGEWGHLGQTLIWAVWVLAAATEGPA. Asn82 is a glycosylation site (N-linked (GlcNAc...) asparagine). The cysteines at positions 94 and 121 are disulfide-linked. The Acyl-ester intermediate role is filled by Ser226. Cys280 and Cys291 form a disulfide bridge. The N-linked (GlcNAc...) asparagine glycan is linked to Asn281. Glu345 serves as the catalytic Charge relay system. Residue Asn363 is glycosylated (N-linked (GlcNAc...) asparagine). The active-site Charge relay system is His454. Asn524 carries N-linked (GlcNAc...) asparagine glycosylation.

It belongs to the type-B carboxylesterase/lipase family. Post-translationally, N-glycosylated.

The protein resides in the secreted. The catalysed reaction is a carboxylic ester + H2O = an alcohol + a carboxylate + H(+). In terms of biological role, involved in the detoxification of xenobiotics and in the activation of ester and amide prodrugs. The chain is Carboxylesterase 5A (CES5A) from Canis lupus familiaris (Dog).